Consider the following 75-residue polypeptide: Small ribosomal subunit protein bS18c (75 aa).

This sequence belongs to the bacterial ribosomal protein bS18 family. In terms of assembly, part of the 30S ribosomal subunit.

Its subcellular location is the plastid. It is found in the chloroplast. This chain is Small ribosomal subunit protein bS18c, found in Angiopteris evecta (Mule's foot fern).